The primary structure comprises 214 residues: ATP phosphoribosyltransferase (214 aa).

The protein belongs to the ATP phosphoribosyltransferase family. Short subfamily. Heteromultimer composed of HisG and HisZ subunits.

Its subcellular location is the cytoplasm. It carries out the reaction 1-(5-phospho-beta-D-ribosyl)-ATP + diphosphate = 5-phospho-alpha-D-ribose 1-diphosphate + ATP. It functions in the pathway amino-acid biosynthesis; L-histidine biosynthesis; L-histidine from 5-phospho-alpha-D-ribose 1-diphosphate: step 1/9. Its function is as follows. Catalyzes the condensation of ATP and 5-phosphoribose 1-diphosphate to form N'-(5'-phosphoribosyl)-ATP (PR-ATP). Has a crucial role in the pathway because the rate of histidine biosynthesis seems to be controlled primarily by regulation of HisG enzymatic activity. This Azoarcus sp. (strain BH72) protein is ATP phosphoribosyltransferase.